The sequence spans 371 residues: MADSQRRPRVFFDIQIGNEKTGRIALELVLVPKTAENFRALCTGEKGMGKQGKPLHFKGSIFHRVIKQFMIQGGDFTAFNGTGGESIYGEKFPDENFELKHDKPFLLSMANSGPGTNGSQFFITTVPTPHLDGKHVVFGEVINGKSVVRKVENMNTQADKPVKDVTIVECGELTGQDYDDADKQTPDATGDPYEDFPDDHQGEELNAQVCFKIASELKNFGNAAFKSGNLALGLEKYQKGLRYLHEFPEPDENDPKELDGQIKALRFALHSNSSLLANKLAQYGNGRSWATYALDTANAANAKDADKAKAYYRRAVASSGLKEEDEALKDLQEAEKLAPGDAGITNEIAKVKKAIKDRQAKERATAQKFFS.

The region spanning 11–172 is the PPIase cyclophilin-type domain; it reads FFDIQIGNEK…KDVTIVECGE (162 aa). Positions 175-195 are disordered; that stretch reads GQDYDDADKQTPDATGDPYED. TPR repeat units lie at residues 214–247, 267–300, and 308–341; these read ASEL…LHEF, FALH…ANAA, and AKAY…APGD.

Belongs to the cyclophilin-type PPIase family. PPIase D subfamily.

It localises to the cytoplasm. The catalysed reaction is [protein]-peptidylproline (omega=180) = [protein]-peptidylproline (omega=0). PPIases accelerate the folding of proteins. It catalyzes the cis-trans isomerization of proline imidic peptide bonds in oligopeptides. The sequence is that of Peptidyl-prolyl cis-trans isomerase D (cpr6) from Aspergillus oryzae (strain ATCC 42149 / RIB 40) (Yellow koji mold).